Here is a 111-residue protein sequence, read N- to C-terminus: Iron-sulfur cluster assembly protein CyaY (111 aa).

This sequence belongs to the frataxin family.

In terms of biological role, involved in iron-sulfur (Fe-S) cluster assembly. May act as a regulator of Fe-S biogenesis. The sequence is that of Iron-sulfur cluster assembly protein CyaY from Cupriavidus taiwanensis (strain DSM 17343 / BCRC 17206 / CCUG 44338 / CIP 107171 / LMG 19424 / R1) (Ralstonia taiwanensis (strain LMG 19424)).